A 431-amino-acid chain; its full sequence is Elongation factor 1-gamma (431 aa).

In terms of domain architecture, GST N-terminal spans Val-2–Gly-84. The 127-residue stretch at Cys-86–Phe-212 folds into the GST C-terminal domain. The segment at Lys-223–Ala-261 is disordered. Over residues Ala-226 to Gln-236 the composition is skewed to low complexity. Basic and acidic residues predominate over residues Lys-237–Glu-254. The region spanning Ser-272–Lys-431 is the EF-1-gamma C-terminal domain. Phosphoserine is present on Ser-294.

As to quaternary structure, interacts with microtubules. May interact with BicDR; the interaction is probably indirect. Interacts (via C-terminus) with Doa; the interaction is probably direct, is transient and leads to phosphorylation of eEF1gamma by Doa. EF-1 is composed of four subunits: alpha, beta, delta, and gamma. In terms of processing, phosphorylated on Ser-294 by LAMMER kinases, including Doa. Phosphorylation on Ser-294 by Doa is required for negative regulation of microtubule-based transport.

Its subcellular location is the cytoplasm. The protein resides in the nucleus. The protein localises to the cytoskeleton. Its function is as follows. Microtubule binding protein involved in regulation of microtubule-based transport. Probably plays a role in anchoring the EF-1 complex to other cellular components. Probably involved in formation and/or development of mechanosensory organs during metamorphosis. Required for cellular and organismal viability. Not essential for the innate immune response to bacterial infection. The sequence is that of Elongation factor 1-gamma from Drosophila melanogaster (Fruit fly).